A 165-amino-acid polypeptide reads, in one-letter code: Dihydrofolate reductase (165 aa).

Residues 3–165 enclose the DHFR domain; it reads VVGLIWAQST…RYRLHSYHRS (163 aa). Position 7–9 (7–9) interacts with substrate; that stretch reads IWA. Residues 8-9 and 16-21 contribute to the NADP(+) site; these read WA and IGRDGG. Residue aspartate 29 participates in substrate binding. NADP(+) is bound at residue 45–48; sequence GRRT. Residue arginine 62 participates in substrate binding. Residues 67–70 and 100–105 contribute to the NADP(+) site; these read LSRQ and IGGEQI. Threonine 119 serves as a coordination point for substrate.

It belongs to the dihydrofolate reductase family.

The catalysed reaction is (6S)-5,6,7,8-tetrahydrofolate + NADP(+) = 7,8-dihydrofolate + NADPH + H(+). Its pathway is cofactor biosynthesis; tetrahydrofolate biosynthesis; 5,6,7,8-tetrahydrofolate from 7,8-dihydrofolate: step 1/1. Its function is as follows. Key enzyme in folate metabolism. Catalyzes an essential reaction for de novo glycine and purine synthesis, and for DNA precursor synthesis. The sequence is that of Dihydrofolate reductase (folA) from Mycobacterium leprae (strain TN).